Reading from the N-terminus, the 397-residue chain is Formate-dependent phosphoribosylglycinamide formyltransferase (397 aa).

N(1)-(5-phospho-beta-D-ribosyl)glycinamide-binding positions include 21–22 and Glu-81; that span reads EL. Residues Arg-113, Lys-154, 194 to 197, and Glu-202 each bind ATP; that span reads EEYV. The region spanning 118-313 is the ATP-grasp domain; sequence KLAAEKVKVP…EFQIHVRSAL (196 aa). Mg(2+)-binding residues include Glu-272 and Glu-284. Residues Asp-291, Lys-361, and 368–369 each bind N(1)-(5-phospho-beta-D-ribosyl)glycinamide; that span reads RR.

It belongs to the PurK/PurT family. As to quaternary structure, homodimer.

The catalysed reaction is N(1)-(5-phospho-beta-D-ribosyl)glycinamide + formate + ATP = N(2)-formyl-N(1)-(5-phospho-beta-D-ribosyl)glycinamide + ADP + phosphate + H(+). Its pathway is purine metabolism; IMP biosynthesis via de novo pathway; N(2)-formyl-N(1)-(5-phospho-D-ribosyl)glycinamide from N(1)-(5-phospho-D-ribosyl)glycinamide (formate route): step 1/1. In terms of biological role, involved in the de novo purine biosynthesis. Catalyzes the transfer of formate to 5-phospho-ribosyl-glycinamide (GAR), producing 5-phospho-ribosyl-N-formylglycinamide (FGAR). Formate is provided by PurU via hydrolysis of 10-formyl-tetrahydrofolate. The polypeptide is Formate-dependent phosphoribosylglycinamide formyltransferase (Sulfurisphaera tokodaii (strain DSM 16993 / JCM 10545 / NBRC 100140 / 7) (Sulfolobus tokodaii)).